We begin with the raw amino-acid sequence, 504 residues long: Immunoglobulin-binding protein EibC (504 aa).

The signal sequence occupies residues 1 to 26; sequence MSKKFTMTLLSSSLAGLLVMSGGVSA. The segment at 27-413 is surface exposed passenger domain; that stretch reads QEEKYTVPYA…IAANTRTLQQ (387 aa). Topologically, residues 27-453 are extracellular; the sequence is QEEKYTVPYA…GLFQPYSVGK (427 aa). Positions 154-280 are head domain; that stretch reads DAKASGEFSV…TGTESDKTYG (127 aa). The segment at 281–296 is neck; sequence TRVLGGLSDGTRNSDA. The interval 297 to 342 is right-handed coiled-coil (RHcc); it reads ATVGQLNRKVGGVYDDVKARITVESEKQKKYTDQKTSEVNEKVEAR. A saddle domain region spans residues 343-368; that stretch reads TTVGVDSDGKLTRAEGATKTIAVNDG. Positions 369-434 are left-handed coiled-coil (LHcc); the sequence is LVALSGRTDR…INENHKEMKR (66 aa). Positions 411–438 form a coiled coil; the sequence is LQQHSARLDSQQRQINENHKEMKRAAAQ. The tract at residues 411-453 is outer membrane translocation of the passenger domain; the sequence is LQQHSARLDSQQRQINENHKEMKRAAAQSAALTGLFQPYSVGK. The next 4 beta stranded transmembrane spans lie at 454 to 464, 467 to 478, 481 to 490, and 494 to 504; these read FNATAAVGGYS, QALAVGVGYRFN, TAAKAGVAFS, and ASWNVGVNFEF. A translocator domain region spans residues 454–504; it reads FNATAAVGGYSDQQALAVGVGYRFNEQTAAKAGVAFSDGDASWNVGVNFEF.

This sequence belongs to the autotransporter-2 (AT-2) (TC 1.B.40) family. Eib subfamily. As to quaternary structure, homotrimer; can probably form mixed heterotrimers in vivo. Will form mixed heterotrimers with EibD; these are correctly located in the outer membrane and bind IgG Fc, although less well than homotrimers. In denaturing gels runs as a band of about 200 kDa. Binds the Fc portion of immunoglobulins; binds more than 1 Fc per subunit.

The protein resides in the cell surface. It localises to the cell outer membrane. Binds (in a non-immune fashion) to the Fc portion of human IgG and less well to IgA; binding occurs on the cell surface. Confers the ability to survive exposure to human serum exposure. Binds to the Fc portion of human IgG and IgA and to whole mouse antibodies also via Fc. This is Immunoglobulin-binding protein EibC from Escherichia coli.